The chain runs to 151 residues: Ubiquitin-conjugating enzyme E2 2 (151 aa).

Residues 1–26 (MSTSARRRLMRDFKRMQTDPPAGVSA) are disordered. A UBC core domain is found at 4–150 (SARRRLMRDF…VRETVEKSWE (147 aa)). Cysteine 88 acts as the Glycyl thioester intermediate in catalysis.

Belongs to the ubiquitin-conjugating enzyme family.

It localises to the cytoplasm. The protein resides in the nucleus. The catalysed reaction is S-ubiquitinyl-[E1 ubiquitin-activating enzyme]-L-cysteine + [E2 ubiquitin-conjugating enzyme]-L-cysteine = [E1 ubiquitin-activating enzyme]-L-cysteine + S-ubiquitinyl-[E2 ubiquitin-conjugating enzyme]-L-cysteine.. Its pathway is protein modification; protein ubiquitination. Catalyzes the covalent attachment of ubiquitin to other proteins. Plays a role in transcription regulation by catalyzing the monoubiquitination of histone H2B to form H2BK123ub1. H2BK123ub1 gives a specific tag for epigenetic transcriptional activation and is also a prerequisite for H3K4me and H3K79me formation. Also involved in postreplication repair of UV-damaged DNA, in N-end rule-dependent protein degradation and in sporulation. The sequence is that of Ubiquitin-conjugating enzyme E2 2 (ubc2) from Aspergillus fumigatus (strain ATCC MYA-4609 / CBS 101355 / FGSC A1100 / Af293) (Neosartorya fumigata).